The chain runs to 367 residues: Palmitoyltransferase ZDHHC2 (367 aa).

The Cytoplasmic segment spans residues M1 to R16. The chain crosses the membrane as a helical span at residues V17 to Y37. The Lumenal portion of the chain corresponds to A38–V54. Residues C55 to F75 traverse the membrane as a helical segment. Residues T76 to K170 are Cytoplasmic-facing. The 51-residue stretch at R127 to A177 folds into the DHHC domain. The active-site S-palmitoyl cysteine intermediate is the C157. The helical transmembrane segment at F171–L191 threads the bilayer. Residues Q192 to K208 are Lumenal-facing. Residues F209–F229 form a helical membrane-spanning segment. Over G230–T367 the chain is Cytoplasmic. A mediates localization to plasma membrane and recycling endosomes region spans residues N299–T367. Positions E330 to T367 are disordered. Polar residues predominate over residues S333 to N348. Residues L335–L336 carry the Non-canonical dileucine endocytic signal motif. S341 bears the Phosphoserine mark. Residues N358–L361 carry the NPxY-like endocytic signal motif.

It belongs to the DHHC palmitoyltransferase family. Monomer. Homodimer. The monomeric form has a higher catalytic activity. Autopalmitoylated. Ubiquitously expressed. Reduced expression in colorectal cancers with liver metastasis.

Its subcellular location is the postsynaptic density. It localises to the postsynaptic recycling endosome membrane. It is found in the cell membrane. The protein resides in the endoplasmic reticulum membrane. The protein localises to the golgi apparatus membrane. The catalysed reaction is L-cysteinyl-[protein] + hexadecanoyl-CoA = S-hexadecanoyl-L-cysteinyl-[protein] + CoA. It catalyses the reaction L-cysteinyl-[protein] + tetradecanoyl-CoA = S-tetradecanoyl-L-cysteinyl-[protein] + CoA. It carries out the reaction L-cysteinyl-[protein] + octadecanoyl-CoA = S-octadecanoyl-L-cysteinyl-[protein] + CoA. Its function is as follows. Palmitoyltransferase that catalyzes the addition of palmitate onto various protein substrates and is involved in a variety of cellular processes. Has no stringent fatty acid selectivity and in addition to palmitate can also transfer onto target proteins myristate from tetradecanoyl-CoA and stearate from octadecanoyl-CoA. In the nervous system, plays a role in long term synaptic potentiation by palmitoylating AKAP5 through which it regulates protein trafficking from the dendritic recycling endosomes to the plasma membrane and controls both structural and functional plasticity at excitatory synapses. In dendrites, mediates the palmitoylation of DLG4 when synaptic activity decreases and induces synaptic clustering of DLG4 and associated AMPA-type glutamate receptors. Also mediates the de novo and turnover palmitoylation of RGS7BP, a shuttle for Gi/o-specific GTPase-activating proteins/GAPs, promoting its localization to the plasma membrane in response to the activation of G protein-coupled receptors. Through the localization of these GTPase-activating proteins/GAPs, it also probably plays a role in G protein-coupled receptors signaling in neurons. Also probably plays a role in cell adhesion by palmitoylating CD9 and CD151 to regulate their expression and function. Palmitoylates the endoplasmic reticulum protein CKAP4 and regulates its localization to the plasma membrane. Could also palmitoylate LCK and regulate its localization to the plasma membrane. In terms of biological role, (Microbial infection) Promotes Chikungunya virus (CHIKV) replication by mediating viral nsp1 palmitoylation. In Homo sapiens (Human), this protein is Palmitoyltransferase ZDHHC2.